Here is a 178-residue protein sequence, read N- to C-terminus: Interleukin-10 (178 aa).

An N-terminal signal peptide occupies residues 1–18 (MPRSALLCCLILLAGVAA). Disulfide bonds link Cys30/Cys126 and Cys80/Cys132. N-linked (GlcNAc...) asparagine glycosylation is present at Asn134.

It belongs to the IL-10 family. Homodimer. Interacts with IL10RA and IL10RB.

It localises to the secreted. Major immune regulatory cytokine that acts on many cells of the immune system where it has profound anti-inflammatory functions, limiting excessive tissue disruption caused by inflammation. Mechanistically, IL10 binds to its heterotetrameric receptor comprising IL10RA and IL10RB leading to JAK1 and STAT2-mediated phosphorylation of STAT3. In turn, STAT3 translocates to the nucleus where it drives expression of anti-inflammatory mediators. Targets antigen-presenting cells (APCs) such as macrophages and monocytes and inhibits their release of pro-inflammatory cytokines including granulocyte-macrophage colony-stimulating factor /GM-CSF, granulocyte colony-stimulating factor/G-CSF, IL-1 alpha, IL-1 beta, IL-6, IL-8 and TNF-alpha. Also interferes with antigen presentation by reducing the expression of MHC-class II and co-stimulatory molecules, thereby inhibiting their ability to induce T cell activation. In addition, controls the inflammatory response of macrophages by reprogramming essential metabolic pathways including mTOR signaling. In Lama glama (Llama), this protein is Interleukin-10 (IL10).